A 657-amino-acid polypeptide reads, in one-letter code: Matrix metalloproteinase-15 (657 aa).

An N-terminal signal peptide occupies residues Met1–Gly36. A propeptide spanning residues His37–Arg127 is cleaved from the precursor. The Cysteine switch signature appears at Pro105 to Gln112. Zn(2+) is bound at residue Cys107. At Tyr128–Val614 the chain is on the extracellular side. The N-linked (GlcNAc...) asparagine glycan is linked to Asn146. A Zn(2+)-binding site is contributed by His255. Glu256 is an active-site residue. Zn(2+) contacts are provided by His259 and His265. A disordered region spans residues Ile295–Ile365. The segment covering Pro328–Gly337 has biased composition (pro residues). Hemopexin repeat units lie at residues Pro363–Leu411, Pro412–Ile457, Tyr459–Pro507, and Thr508–Cys555. A disulfide bond links Cys366 and Cys555. Asn414 carries N-linked (GlcNAc...) asparagine glycosylation. The disordered stretch occupies residues Pro561–Ser599. The segment covering Gly585–Ser599 has biased composition (basic and acidic residues). Residues Val615 to Val635 form a helical membrane-spanning segment. Over Gln636–Val657 the chain is Cytoplasmic.

Belongs to the peptidase M10A family. It depends on Zn(2+) as a cofactor. The cofactor is Ca(2+). Post-translationally, the precursor is cleaved by a furin endopeptidase.

It is found in the membrane. Its function is as follows. Endopeptidase that degrades various components of the extracellular matrix. May activate progelatinase A. This is Matrix metalloproteinase-15 (Mmp15) from Mus musculus (Mouse).